Consider the following 379-residue polypeptide: Probable protein arginine N-methyltransferase 6.1 (379 aa).

Residues 1–35 (MLPSHLNGHSPLARRRPRLSAASPPATGDSDAAAA) are disordered. A compositionally biased stretch (low complexity) spans 19–35 (LSAASPPATGDSDAAAA). The SAM-dependent MTase PRMT-type domain maps to 45-379 (DRIYFQSYSH…FLNIQLDCTM (335 aa)). The S-adenosyl-L-methionine site is built by histidine 58, arginine 67, glycine 91, glutamate 113, and glutamate 142. Active-site residues include glutamate 156 and glutamate 165.

This sequence belongs to the class I-like SAM-binding methyltransferase superfamily. Protein arginine N-methyltransferase family. PRMT6 subfamily.

Arginine methyltransferase that can both catalyze the formation of omega-N monomethylarginine (MMA) and asymmetrical dimethylarginine (aDMA). In Oryza sativa subsp. indica (Rice), this protein is Probable protein arginine N-methyltransferase 6.1 (PRMT6.1).